Consider the following 381-residue polypeptide: G-protein coupled receptor homolog Q2/3L (381 aa).

Residues 1-91 lie on the Extracellular side of the membrane; sequence MNYTLSTVSS…HCDDGVDTTS (91 aa). N2, N15, N19, N41, N50, N56, and N62 each carry an N-linked (GlcNAc...) asparagine; by host glycan. Residues 92 to 112 form a helical membrane-spanning segment; the sequence is FGLITLYSTIFFLGLFGNIIV. Topologically, residues 113 to 126 are cytoplasmic; it reads LTVLRKYKIKTIQD. Residues 127 to 147 form a helical membrane-spanning segment; that stretch reads MFLLNLTLSDLIFVLVFPFNL. Residues 148 to 165 are Extracellular-facing; sequence YDSIAKQWSLGDCLCKFK. Residues 166–186 traverse the membrane as a helical segment; the sequence is AMFYFVGFYNSMSFITLMSID. The Cytoplasmic segment spans residues 187–206; it reads RYLAVVHPVKSMPIRTKRYG. Residues 207–227 form a helical membrane-spanning segment; sequence IVLSMVVWIVSTIESFPIMLF. Topologically, residues 228–251 are extracellular; it reads YETKKVYGITYCHVFYNDNAKIWK. The chain crosses the membrane as a helical span at residues 252-272; the sequence is LFINFEINIFGMIIPLTILLY. The Cytoplasmic portion of the chain corresponds to 273-294; that stretch reads CYYKILNTLKTSQTKNKKAIKM. The chain crosses the membrane as a helical span at residues 295 to 315; that stretch reads VFLIVICSVLFLLPFSVTVFV. The Extracellular segment spans residues 316–336; the sequence is SSLYLLNVFSGCMALRFVNLA. The chain crosses the membrane as a helical span at residues 337 to 357; sequence VHVAEIVSLCHCFINPLIYAF. Residues 358–381 lie on the Cytoplasmic side of the membrane; it reads CSREFTKKLLRLRTTSSAGSISIG.

The protein belongs to the G-protein coupled receptor 1 family.

It is found in the host cell membrane. Functionally, putative chemokine receptor. In Ovis aries (Sheep), this protein is G-protein coupled receptor homolog Q2/3L.